Reading from the N-terminus, the 426-residue chain is Mediator of RNA polymerase II transcription subunit 1 (426 aa).

The segment at 319-349 (ISTSNSGSVQPKPRRKSSVLSNRRPSMTDSM) is disordered. Positions 336–347 (SVLSNRRPSMTD) are enriched in polar residues.

Belongs to the Mediator complex subunit 1 family. As to quaternary structure, component of the Mediator complex.

The protein resides in the nucleus. In terms of biological role, component of the Mediator complex, a coactivator involved in the regulated transcription of nearly all RNA polymerase II-dependent genes. Mediator functions as a bridge to convey information from gene-specific regulatory proteins to the basal RNA polymerase II transcription machinery. Mediator is recruited to promoters by direct interactions with regulatory proteins and serves as a scaffold for the assembly of a functional preinitiation complex with RNA polymerase II and the general transcription factors. In Kluyveromyces lactis (strain ATCC 8585 / CBS 2359 / DSM 70799 / NBRC 1267 / NRRL Y-1140 / WM37) (Yeast), this protein is Mediator of RNA polymerase II transcription subunit 1 (MED1).